Consider the following 240-residue polypeptide: 1-(5-phosphoribosyl)-5-[(5-phosphoribosylamino)methylideneamino] imidazole-4-carboxamide isomerase (240 aa).

Asp-8 acts as the Proton acceptor in catalysis. Asp-130 acts as the Proton donor in catalysis.

This sequence belongs to the HisA/HisF family.

It localises to the cytoplasm. It carries out the reaction 1-(5-phospho-beta-D-ribosyl)-5-[(5-phospho-beta-D-ribosylamino)methylideneamino]imidazole-4-carboxamide = 5-[(5-phospho-1-deoxy-D-ribulos-1-ylimino)methylamino]-1-(5-phospho-beta-D-ribosyl)imidazole-4-carboxamide. The protein operates within amino-acid biosynthesis; L-histidine biosynthesis; L-histidine from 5-phospho-alpha-D-ribose 1-diphosphate: step 4/9. This chain is 1-(5-phosphoribosyl)-5-[(5-phosphoribosylamino)methylideneamino] imidazole-4-carboxamide isomerase, found in Flavobacterium johnsoniae (strain ATCC 17061 / DSM 2064 / JCM 8514 / BCRC 14874 / CCUG 350202 / NBRC 14942 / NCIMB 11054 / UW101) (Cytophaga johnsonae).